The primary structure comprises 120 residues: uncharacterized protein (120 aa).

A helical membrane pass occupies residues 22–44 (ITVASCIGAAQGALFSIASALLL). N114 carries an N-linked (GlcNAc...) asparagine glycan.

It localises to the membrane. This is an uncharacterized protein from Saccharomyces cerevisiae (strain ATCC 204508 / S288c) (Baker's yeast).